The sequence spans 81 residues: Defensin-like protein 313 (81 aa).

An N-terminal signal peptide occupies residues 1–32 (MESKRSSSSPLLILITTIMIIFIISGPKSVDA). 3 disulfides stabilise this stretch: cysteine 34–cysteine 63, cysteine 45–cysteine 74, and cysteine 49–cysteine 76.

Belongs to the DEFL family.

It is found in the secreted. The protein is Defensin-like protein 313 of Arabidopsis thaliana (Mouse-ear cress).